We begin with the raw amino-acid sequence, 273 residues long: Putative phosphoenolpyruvate synthase regulatory protein (273 aa).

Position 153–160 (A153–T160) interacts with ADP.

This sequence belongs to the pyruvate, phosphate/water dikinase regulatory protein family. PSRP subfamily.

The enzyme catalyses [pyruvate, water dikinase] + ADP = [pyruvate, water dikinase]-phosphate + AMP + H(+). It carries out the reaction [pyruvate, water dikinase]-phosphate + phosphate + H(+) = [pyruvate, water dikinase] + diphosphate. Bifunctional serine/threonine kinase and phosphorylase involved in the regulation of the phosphoenolpyruvate synthase (PEPS) by catalyzing its phosphorylation/dephosphorylation. The chain is Putative phosphoenolpyruvate synthase regulatory protein from Xylella fastidiosa (strain M12).